Consider the following 492-residue polypeptide: 2,3-bisphosphoglycerate-independent phosphoglycerate mutase (492 aa).

The Mn(2+) site is built by Asp-11 and Ser-61. Catalysis depends on Ser-61, which acts as the Phosphoserine intermediate. Substrate is bound by residues His-118, 147-148 (RD), Arg-178, Arg-184, 248-251 (RNDR), and Lys-320. Mn(2+)-binding residues include Asp-386, His-390, Asp-427, His-428, and His-445.

It belongs to the BPG-independent phosphoglycerate mutase family. As to quaternary structure, monomer. The cofactor is Mn(2+).

It catalyses the reaction (2R)-2-phosphoglycerate = (2R)-3-phosphoglycerate. The protein operates within carbohydrate degradation; glycolysis; pyruvate from D-glyceraldehyde 3-phosphate: step 3/5. Its function is as follows. Catalyzes the interconversion of 2-phosphoglycerate and 3-phosphoglycerate. This is 2,3-bisphosphoglycerate-independent phosphoglycerate mutase from Campylobacter jejuni subsp. jejuni serotype O:2 (strain ATCC 700819 / NCTC 11168).